Here is a 333-residue protein sequence, read N- to C-terminus: Anthranilate phosphoribosyltransferase (333 aa).

Residues Gly81, 84-85, Thr89, 91-94, 109-117, and Ala121 contribute to the 5-phospho-alpha-D-ribose 1-diphosphate site; these read GD, NIST, and KHGNRSVSS. An anthranilate-binding site is contributed by Gly81. Ser93 contributes to the Mg(2+) binding site. Asn112 is a binding site for anthranilate. Position 167 (Arg167) interacts with anthranilate. 2 residues coordinate Mg(2+): Asp225 and Glu226.

Belongs to the anthranilate phosphoribosyltransferase family. Homodimer. Requires Mg(2+) as cofactor.

It carries out the reaction N-(5-phospho-beta-D-ribosyl)anthranilate + diphosphate = 5-phospho-alpha-D-ribose 1-diphosphate + anthranilate. Its pathway is amino-acid biosynthesis; L-tryptophan biosynthesis; L-tryptophan from chorismate: step 2/5. Functionally, catalyzes the transfer of the phosphoribosyl group of 5-phosphorylribose-1-pyrophosphate (PRPP) to anthranilate to yield N-(5'-phosphoribosyl)-anthranilate (PRA). This is Anthranilate phosphoribosyltransferase from Haemophilus influenzae (strain 86-028NP).